The primary structure comprises 294 residues: Light-independent protochlorophyllide reductase iron-sulfur ATP-binding protein (294 aa).

ATP is bound by residues 10–15 (GIGKST) and lysine 39. Serine 14 is a binding site for Mg(2+). Residues cysteine 95 and cysteine 129 each contribute to the [4Fe-4S] cluster site. 180–181 (NR) contacts ATP.

It belongs to the NifH/BchL/ChlL family. Homodimer. Protochlorophyllide reductase is composed of three subunits; ChlL, ChlN and ChlB. [4Fe-4S] cluster serves as cofactor.

It is found in the plastid. The protein resides in the chloroplast. The catalysed reaction is chlorophyllide a + oxidized 2[4Fe-4S]-[ferredoxin] + 2 ADP + 2 phosphate = protochlorophyllide a + reduced 2[4Fe-4S]-[ferredoxin] + 2 ATP + 2 H2O. It functions in the pathway porphyrin-containing compound metabolism; chlorophyll biosynthesis (light-independent). Functionally, component of the dark-operative protochlorophyllide reductase (DPOR) that uses Mg-ATP and reduced ferredoxin to reduce ring D of protochlorophyllide (Pchlide) to form chlorophyllide a (Chlide). This reaction is light-independent. The L component serves as a unique electron donor to the NB-component of the complex, and binds Mg-ATP. This chain is Light-independent protochlorophyllide reductase iron-sulfur ATP-binding protein, found in Pleurastrum terricola (Filamentous green alga).